A 328-amino-acid chain; its full sequence is L-tyrosine isonitrile synthase (328 aa).

The protein belongs to the isocyanide synthase family. In terms of assembly, monomer in solution.

It carries out the reaction D-ribulose 5-phosphate + L-tyrosine = (2S)-3-(4-hydroxyphenyl)-2-isocyanopropanoate + hydroxyacetone + formaldehyde + phosphate + H2O + H(+). Involved in the biosynthesis of paerucumarin, a cyclized isocyano derivative of tyrosine. Responsible for the synthesis of the isonitrile group on tyrosine using the C2 of ribulose 5-phosphate as the source of the carbon atom. The protein is L-tyrosine isonitrile synthase of Pseudomonas aeruginosa (strain ATCC 15692 / DSM 22644 / CIP 104116 / JCM 14847 / LMG 12228 / 1C / PRS 101 / PAO1).